The primary structure comprises 320 residues: Methenyltetrahydromethanopterin cyclohydrolase (320 aa).

The protein belongs to the MCH family.

The protein localises to the cytoplasm. The enzyme catalyses 5,10-methenyl-5,6,7,8-tetrahydromethanopterin + H2O = N(5)-formyl-5,6,7,8-tetrahydromethanopterin + H(+). In terms of biological role, catalyzes the hydrolysis of methenyl-H(4)MPT(+) to 5-formyl-H(4)MPT. This chain is Methenyltetrahydromethanopterin cyclohydrolase, found in Methanococcoides burtonii (strain DSM 6242 / NBRC 107633 / OCM 468 / ACE-M).